Here is a 410-residue protein sequence, read N- to C-terminus: LL-diaminopimelate aminotransferase (410 aa).

The substrate site is built by tyrosine 15 and glycine 42. Residues tyrosine 72, 108–109, tyrosine 132, asparagine 187, tyrosine 218, and 246–248 contribute to the pyridoxal 5'-phosphate site; these read SK and SFS. Residues lysine 109, tyrosine 132, and asparagine 187 each coordinate substrate. At lysine 249 the chain carries N6-(pyridoxal phosphate)lysine. 2 residues coordinate pyridoxal 5'-phosphate: arginine 257 and asparagine 292. Substrate-binding residues include asparagine 292 and arginine 388.

This sequence belongs to the class-I pyridoxal-phosphate-dependent aminotransferase family. LL-diaminopimelate aminotransferase subfamily. In terms of assembly, homodimer. Pyridoxal 5'-phosphate serves as cofactor.

The enzyme catalyses (2S,6S)-2,6-diaminopimelate + 2-oxoglutarate = (S)-2,3,4,5-tetrahydrodipicolinate + L-glutamate + H2O + H(+). The protein operates within amino-acid biosynthesis; L-lysine biosynthesis via DAP pathway; LL-2,6-diaminopimelate from (S)-tetrahydrodipicolinate (aminotransferase route): step 1/1. Its function is as follows. Involved in the synthesis of meso-diaminopimelate (m-DAP or DL-DAP), required for both lysine and peptidoglycan biosynthesis. Catalyzes the direct conversion of tetrahydrodipicolinate to LL-diaminopimelate. The sequence is that of LL-diaminopimelate aminotransferase from Geotalea daltonii (strain DSM 22248 / JCM 15807 / FRC-32) (Geobacter daltonii).